Here is a 223-residue protein sequence, read N- to C-terminus: Deoxyribose-phosphate aldolase (223 aa).

The active-site Proton donor/acceptor is D89. K152 acts as the Schiff-base intermediate with acetaldehyde in catalysis. Residue K181 is the Proton donor/acceptor of the active site.

The protein belongs to the DeoC/FbaB aldolase family. DeoC type 1 subfamily.

It localises to the cytoplasm. The enzyme catalyses 2-deoxy-D-ribose 5-phosphate = D-glyceraldehyde 3-phosphate + acetaldehyde. Its pathway is carbohydrate degradation; 2-deoxy-D-ribose 1-phosphate degradation; D-glyceraldehyde 3-phosphate and acetaldehyde from 2-deoxy-alpha-D-ribose 1-phosphate: step 2/2. Functionally, catalyzes a reversible aldol reaction between acetaldehyde and D-glyceraldehyde 3-phosphate to generate 2-deoxy-D-ribose 5-phosphate. The sequence is that of Deoxyribose-phosphate aldolase from Bacillus mycoides (strain KBAB4) (Bacillus weihenstephanensis).